The following is a 481-amino-acid chain: Phototropic-responsive NPH3 family protein NPY4 (481 aa).

Residues Thr29 to Ala102 enclose the BTB domain. In terms of domain architecture, NPH3 spans Asp207–Arg450. Tyr391 carries the post-translational modification Phosphotyrosine. The disordered stretch occupies residues Thr456 to Phe481. The span at Thr460–Asn469 shows a compositional bias: low complexity.

Belongs to the NPH3 family. As to expression, expressed in the hypocotyl cells that would differentiate into vascular bundles. Highly expressed in primary root tips and radicles.

The protein resides in the cell membrane. It localises to the cytoplasm. The protein localises to the cytosol. It participates in protein modification; protein ubiquitination. Its function is as follows. May act as a substrate-specific adapter of an E3 ubiquitin-protein ligase complex (CUL3-RBX1-BTB) which mediates the ubiquitination and subsequent proteasomal degradation of target proteins. Plays an essential role in auxin-mediated organogenesis and in root gravitropic responses through the control of PIN proteins (e.g. PIN1 and PIN2) polarity in the root tip endodermal cell layer and in shoot epidermis. Recruited to the plasma membrane by PINs (e.g. PIN1 and PIN2) and, in concert with AGC kinases-mediated (e.g. D6PK and PID) PINs phosphorylation, maintains their polarity through limiting lateral diffusion-based escape. This Arabidopsis thaliana (Mouse-ear cress) protein is Phototropic-responsive NPH3 family protein NPY4.